Reading from the N-terminus, the 252-residue chain is Probable phosphatase Shewmr4_2619 (252 aa).

9 residues coordinate Zn(2+): His-8, His-10, His-16, His-41, Glu-74, His-102, His-132, Asp-193, and His-195.

Belongs to the PHP family. The cofactor is Zn(2+).

The chain is Probable phosphatase Shewmr4_2619 from Shewanella sp. (strain MR-4).